The sequence spans 1167 residues: MLEGCILAGSRQIESTTNNSVPGAPNRISFAKLREPLEVPGLLDVQTESFEWLIGAEDWFQRAADRGDVDPKGGLQEVLEELSPIEDFSGSMSLSFSDPRFDEVKAPVDECKDKDMTYAAPLFVTAEFINNNTGEIKSQTVFMGDFPMMTEKGTFIINGTERVVVSQLVRSPGVYFDESIDKSTEKTLHSVKVIPGRGAWLEFDVDKRDTVGVRIDRKRRQPVTVLLKALGWTNEQIVERFGFSEIMMSTLEKDNTAGTDEALLDIYRKLRPGEPPTKESAQTLLENLFFKEKRYDLARVGRYKVNKKLGLNVGQPITSSTLTEEDVVATIEYLVRLHQGDQTMTAPGGSEVPVEVDDIDHFGNRRLRTVGELIQNQIRVGLSRMERVVRERMTTQDVEAITPQTLINIRPVVAAIKEFFGTSQLSQFMDQNNPLSGLTHKRRLSALGPGGLSRERAGLEVRDVHSSHYGRMCPIETPEGPNIGLIGSLSVYARVNPFGFIETPYRKVTDGVVTDQIDYLTADEEDRHVVAQANSPLDGDGHFEEERVLVRRKGGEVEFVSAAEVDYMDVSPRQMVSVATAMIPFLEHDDANRALMGANMQRQAVPLVRSEAPLVGTGMELRAAIDAGDVVVTEKAGVVEEVSADYITVMADDGTRHTYRMRKFARSNHGTCANQRPIVDAGQRVESGQVLADGPCTENGEMALGKNLLVAIMPWEGHNYEDAIILSNRLVEEDVLTSIHIEEHEIDARDTKLGAEEITRDIPNVSDEVLADLDERGIIRIGAEVRDGDILVGKVTPKGETELTPEERLLRAIFGEKAREVRDTSLKVPHGESGKVIGIRVFSREDDDELPAGVNELVRVYVAQKRKISDGDKLAGRHGNKGVIGKILPVEDMPFLPDGTPVDIILNTHGVPRRMNIGQILETHLGWVAKAGWNIDVAAGTPEWAAKLPEQMLSAPADSIVATPVFDGAQEGELQGLLGSTLPNRDGETMVNADGKATLFDGRSGEPFPYPVTVGYMYILKLHHLVDDKIHARSTGPYSMITQQPLGGKAQFGGQRFGEMECWAMQAYGAAYTLQELLTIKSDDTVGRVKVYEAIVKGENIPEPGIPESFKVLLKELQSLCLNVEVLSSDGAAIEMRDGDDEDLERAAANLGINLSRNESASVEDLA.

Belongs to the RNA polymerase beta chain family. In terms of assembly, the RNAP catalytic core consists of 2 alpha, 1 beta, 1 beta' and 1 omega subunit. When a sigma factor is associated with the core the holoenzyme is formed, which can initiate transcription.

The catalysed reaction is RNA(n) + a ribonucleoside 5'-triphosphate = RNA(n+1) + diphosphate. In terms of biological role, DNA-dependent RNA polymerase catalyzes the transcription of DNA into RNA using the four ribonucleoside triphosphates as substrates. This chain is DNA-directed RNA polymerase subunit beta, found in Mycolicibacterium vanbaalenii (strain DSM 7251 / JCM 13017 / BCRC 16820 / KCTC 9966 / NRRL B-24157 / PYR-1) (Mycobacterium vanbaalenii).